The chain runs to 631 residues: MAQTSSSSSSTFEHLWSSLEPDSTYFDLPQPSQGTSEASGSEESNMDVFHLQGMAQFNLLSSAMDQMGSRAAPASPYTPEHAASAPTHSPYAQPSSTFDTMSPAPVIPSNTDYPGPHHFEVTFQQSSTAKSATWTYSPLLKKLYCQIAKTCPIQIKVSTPPPPGTAIRAMPVYKKAEHVTDIVKRCPNHELGRDFNEGQSAPASHLIRVEGNNLAQYVDDPVTGRQSVVVPYEPPQVGTEFTTILYNFMCNSSCVGGMNRRPILVIITLETRDGQVLGRRSFEGRICACPGRDRKADEDHYREQQALNESTTKNGAASKRAFKQSPPAIPALGTNVKKRRHGDEDMFYMHVRGRENFEILMKVKESLELMELVPQPLVDSYRQQQQQQLLQRPSHLQPPSYGPVLSPMNKVHGGVNKLPSVNQLVGQPPPHSSAAGPNLGPMGSGMLNSHGHSMPANGEMNGGHSSQTMVSGSHCTPPPPYHADPSLVSFLTGLGCPNCIECFTSQGLQSIYHLQNLTIEDLGALKVPDQYRMTIWRGLQDLKQSHDCGQQLLRSSSNAATISIGGSGELQRQRVMEAVHFRVRHTITIPNRGGAGAVTGPDEWADFGFDLPDCKSRKQPIKEEFTETESH.

Residues 1 to 43 form a transactivation region; it reads MAQTSSSSSSTFEHLWSSLEPDSTYFDLPQPSQGTSEASGSEE. Disordered stretches follow at residues 23 to 43 and 69 to 113; these read STYF…GSEE and SRAA…NTDY. Residue T24 is modified to Phosphothreonine; by PLK1. A Phosphotyrosine; by SRC and HCK modification is found at Y25. Composition is skewed to polar residues over residues 30–43 and 86–100; these read QPSQ…GSEE and PTHS…TFDT. Y91 is subject to Phosphotyrosine; by ABL1. The tract at residues 123–302 is DNA-binding; the sequence is FQQSSTAKSA…DRKADEDHYR (180 aa). 4 residues coordinate Zn(2+): C186, H189, C250, and C254. A compositionally biased stretch (polar residues) spans 306–315; it reads ALNESTTKNG. The segment at 306 to 334 is disordered; that stretch reads ALNESTTKNGAASKRAFKQSPPAIPALGT. An interaction with HIPK2 region spans residues 337-372; sequence KKRRHGDEDMFYMHVRGRENFEILMKVKESLELMEL. Residues 337–378 form an oligomerization region; the sequence is KKRRHGDEDMFYMHVRGRENFEILMKVKESLELMELVPQPLV. A PPxY motif motif is present at residues 477–481; sequence PPPPY. The SAM domain occupies 479 to 545; that stretch reads PPYHADPSLV…WRGLQDLKQS (67 aa). K622 participates in a covalent cross-link: Glycyl lysine isopeptide (Lys-Gly) (interchain with G-Cter in SUMO); alternate. A Glycyl lysine isopeptide (Lys-Gly) (interchain with G-Cter in SUMO2); alternate cross-link involves residue K622.

It belongs to the p53 family. As to quaternary structure, found in a complex with p53/TP53 and CABLES1. The C-terminal oligomerization domain binds to the ABL1 tyrosine kinase SH3 domain. Interacts with HECW2, HIPK2, RANBP9 and WWOX. Interacts (via SAM domain) with FBXO45 (via B30.2/SPRY domain). Interacts with YAP1 (phosphorylated form). Interacts with HCK (via SH3 domain); this inhibits TP73 activity and degradation. Interacts (via SAM domain) with NQO1; this interaction is NADH-dependent, stabilizes TP73 in response to oxidative stress and protects it from ubiquitin-independent degradation by the 20S proteasome. Zn(2+) is required as a cofactor. In terms of processing, sumoylated on Lys-622, which potentiates proteasomal degradation but does not affect transcriptional activity. Phosphorylation by PLK1 and PLK3 inhibits the transcription regulator activity and pro-apoptotic function. Higher levels of phosphorylation seen in striatal neurons of. mutant huntingtin (htt) transgenic mice. Post-translationally, polyubiquitinated by RCHY1/PIRH2; leading to its degradation by the proteasome. As to expression, found in striatal neurons of mutant huntingtin (htt) transgenic mice (at protein level). Isoform 1 is expressed in the nasal epithelium, the vomeronasal organ, the hippocampus and the hypothalamus.

It is found in the nucleus. It localises to the cytoplasm. In terms of biological role, participates in the apoptotic response to DNA damage. Isoforms containing the transactivation domain are pro-apoptotic, isoforms lacking the domain are anti-apoptotic and block the function of p53 and transactivating p73 isoforms. May be a tumor suppressor protein. Is an activator of FOXJ1 expression, essential for the positive regulation of lung ciliated cell differentiation. The protein is Tumor protein p73 (Tp73) of Mus musculus (Mouse).